Reading from the N-terminus, the 219-residue chain is 2-hydroxy-3-keto-5-methylthiopentenyl-1-phosphate phosphatase (219 aa).

Belongs to the HAD-like hydrolase superfamily. MtnX family.

It catalyses the reaction 2-hydroxy-5-methylsulfanyl-3-oxopent-1-enyl phosphate + H2O = 1,2-dihydroxy-5-(methylsulfanyl)pent-1-en-3-one + phosphate. Its pathway is amino-acid biosynthesis; L-methionine biosynthesis via salvage pathway; L-methionine from S-methyl-5-thio-alpha-D-ribose 1-phosphate: step 4/6. Dephosphorylates 2-hydroxy-3-keto-5-methylthiopentenyl-1-phosphate (HK-MTPenyl-1-P) yielding 1,2-dihydroxy-3-keto-5-methylthiopentene (DHK-MTPene). The sequence is that of 2-hydroxy-3-keto-5-methylthiopentenyl-1-phosphate phosphatase from Bacillus cereus (strain ZK / E33L).